A 430-amino-acid chain; its full sequence is tRNA(Ile)-lysidine synthase (430 aa).

21–26 (SGGLDS) provides a ligand contact to ATP.

Belongs to the tRNA(Ile)-lysidine synthase family.

The protein resides in the cytoplasm. It catalyses the reaction cytidine(34) in tRNA(Ile2) + L-lysine + ATP = lysidine(34) in tRNA(Ile2) + AMP + diphosphate + H(+). In terms of biological role, ligates lysine onto the cytidine present at position 34 of the AUA codon-specific tRNA(Ile) that contains the anticodon CAU, in an ATP-dependent manner. Cytidine is converted to lysidine, thus changing the amino acid specificity of the tRNA from methionine to isoleucine. The protein is tRNA(Ile)-lysidine synthase of Salmonella schwarzengrund (strain CVM19633).